The following is a 148-amino-acid chain: uncharacterized protein (148 aa).

Positions 1-22 (MVQTVLNSVWLWRSVLLRLTFS) are cleaved as a signal peptide.

This is an uncharacterized protein from Saccharomyces cerevisiae (strain ATCC 204508 / S288c) (Baker's yeast).